Here is a 251-residue protein sequence, read N- to C-terminus: Flap endonuclease Xni (251 aa).

Aspartate 104 contacts Mg(2+). The 5'-3' exonuclease domain maps to 160-249; sequence VQPQQLPDYW…IDGNLQQLRL (90 aa). Leucine 171, alanine 172, proline 180, valine 182, and isoleucine 185 together coordinate K(+). Residues 184–189 are interaction with DNA; it reads GIGPKS.

The protein belongs to the Xni family. Mg(2+) is required as a cofactor. It depends on K(+) as a cofactor.

Has flap endonuclease activity. During DNA replication, flap endonucleases cleave the 5'-overhanging flap structure that is generated by displacement synthesis when DNA polymerase encounters the 5'-end of a downstream Okazaki fragment. The sequence is that of Flap endonuclease Xni from Escherichia coli O7:K1 (strain IAI39 / ExPEC).